Here is a 196-residue protein sequence, read N- to C-terminus: Protein LSM12 homolog A (196 aa).

A Sm domain is found at 3–73 (APGPGEYFSV…VSEVDIINDR (71 aa)). The AD domain occupies 81 to 175 (ASLNISKLAN…IVEKHFRDVE (95 aa)). The interval 174–196 (VESQKTMQRSQAQQTQKDSSLSS) is disordered. A compositionally biased stretch (polar residues) spans 177 to 196 (QKTMQRSQAQQTQKDSSLSS).

This sequence belongs to the LSM12 family.

The chain is Protein LSM12 homolog A (lsm12a) from Danio rerio (Zebrafish).